Consider the following 111-residue polypeptide: uncharacterized protein (111 aa).

The next 2 helical transmembrane spans lie at 45–65 (AFLIPVKYTAATVLLALLLVI) and 91–111 (LPAGIGLAVLTKVLKHLILHI).

It is found in the cell membrane. This is an uncharacterized protein from Methanothermobacter thermautotrophicus (strain ATCC 29096 / DSM 1053 / JCM 10044 / NBRC 100330 / Delta H) (Methanobacterium thermoautotrophicum).